The sequence spans 603 residues: NADH-ubiquinone oxidoreductase chain 5 (603 aa).

16 helical membrane-spanning segments follow: residues 4 to 24 (YTTM…ATLI), 36 to 56 (VKMT…MFMC), 87 to 107 (MMFI…SLWY), 114 to 134 (INQF…LVTA), 137 to 157 (LFQL…LIGW), 171 to 191 (AILY…WFLL), 200 to 220 (QMIL…LLAA), 241 to 261 (TPVS…FLLI), 272 to 292 (LIQT…AICA), 301 to 320 (IVAF…IGIN), 325 to 347 (AFLH…GSII), 366 to 386 (LPLT…MPFL), 407 to 429 (WALS…MILL), 457 to 477 (LTIG…PTSP), 482 to 502 (IPLY…LTAF), and 583 to 603 (MIKL…LLIM).

It belongs to the complex I subunit 5 family. In terms of assembly, core subunit of respiratory chain NADH dehydrogenase (Complex I) which is composed of 45 different subunits.

It is found in the mitochondrion inner membrane. The enzyme catalyses a ubiquinone + NADH + 5 H(+)(in) = a ubiquinol + NAD(+) + 4 H(+)(out). In terms of biological role, core subunit of the mitochondrial membrane respiratory chain NADH dehydrogenase (Complex I) which catalyzes electron transfer from NADH through the respiratory chain, using ubiquinone as an electron acceptor. Essential for the catalytic activity and assembly of complex I. This Hylobates lar (Lar gibbon) protein is NADH-ubiquinone oxidoreductase chain 5 (MT-ND5).